A 222-amino-acid chain; its full sequence is Interleukin-12 subunit alpha (222 aa).

An N-terminal signal peptide occupies residues Met1 to Ala25. Cystine bridges form between Cys40/Cys113, Cys67/Cys199, and Cys88/Cys126. Residues Asn42, Asn96, and Asn110 are each glycosylated (N-linked (GlcNAc...) asparagine).

This sequence belongs to the IL-6 superfamily. In terms of assembly, heterodimer with IL12B; disulfide-linked. This heterodimer is known as interleukin IL-12. Heterodimer with EBI3/IL27B; not disulfide-linked. This heterodimer is known as interleukin IL-35. Interacts with NBR1; this interaction promotes IL-12 secretion.

It localises to the secreted. Its function is as follows. Heterodimerizes with IL12B to form the IL-12 cytokine or with EBI3/IL27B to form the IL-35 cytokine. IL-12 is primarily produced by professional antigen-presenting cells (APCs) such as B-cells and dendritic cells (DCs) as well as macrophages and granulocytes and regulates T-cell and natural killer-cell responses, induces the production of interferon-gamma (IFN-gamma), favors the differentiation of T-helper 1 (Th1) cells and is an important link between innate resistance and adaptive immunity. Mechanistically, exerts its biological effects through a receptor composed of IL12R1 and IL12R2 subunits. Binding to the receptor results in the rapid tyrosine phosphorylation of a number of cellular substrates including the JAK family kinases TYK2 and JAK2. In turn, recruited STAT4 gets phosphorylated and translocates to the nucleus where it regulates cytokine/growth factor responsive genes. As part of IL-35, plays essential roles in maintaining the immune homeostasis of the liver microenvironment and also functions as an immune-suppressive cytokine. Mediates biological events through unconventional receptors composed of IL12RB2 and gp130/IL6ST heterodimers or homodimers. Signaling requires the transcription factors STAT1 and STAT4, which form a unique heterodimer that binds to distinct DNA sites. This chain is Interleukin-12 subunit alpha (IL12A), found in Canis lupus familiaris (Dog).